The primary structure comprises 394 residues: GPI transamidase component GAB1 (394 aa).

Residues 1 to 135 (MDSTALKVAL…TLLSCISRSS (135 aa)) lie on the Cytoplasmic side of the membrane. A helical membrane pass occupies residues 136–156 (IIFTNFAISSSLYCILAEGNV). Topologically, residues 157–160 (LLSS) are lumenal. The helical transmembrane segment at 161–181 (VMISISGYLSVYPILLLIPLL) threads the bilayer. Over 182-190 (GMLKSWRQR) the chain is Cytoplasmic. The helical transmembrane segment at 191–211 (ILSAIVSILSLLILLLFSYSI) threads the bilayer. The Lumenal segment spans residues 212 to 224 (LGSQSWSFLTQVY). A helical membrane pass occupies residues 225–245 (GSIITFEKVFPNLGLWWYFFI). The interval 235–255 (PNLGLWWYFFIEMFDTFIPFF) is may be involved in recognition of long-chain fatty acids in GPI. The Cytoplasmic portion of the chain corresponds to 246–250 (EMFDT). Residues 251–271 (FIPFFKAVFNIFIAVFITPFT) traverse the membrane as a helical segment. At 272–297 (LRYHKQPFYAFILCIGWIVLTKPYPS) the chain is on the lumenal side. The chain crosses the membrane as a helical span at residues 298-318 (LGDAGFFFSFLPFFTPLFGYL). Over 319–324 (RYPIIS) the chain is Cytoplasmic. Residues 325–345 (ALLFLHAIVLAPIFYHLWVVL) traverse the membrane as a helical segment. Over 346-351 (GSGNSN) the chain is Lumenal. The helical transmembrane segment at 352–372 (FFYAISLVYALAIASILVDLN) threads the bilayer. Residues 373–394 (WAMLRIEYDNGIPNFKLKVTQI) are Cytoplasmic-facing.

It belongs to the PIGU family. As to quaternary structure, forms a complex with GPI16, GPI17, GPI8 and GAA1.

The protein localises to the endoplasmic reticulum membrane. Its pathway is glycolipid biosynthesis; glycosylphosphatidylinositol-anchor biosynthesis. Functionally, component of the GPI transamidase complex. May be involved in the recognition of either the GPI attachment signal or the lipid portion of GPI. This Saccharomyces cerevisiae (strain ATCC 204508 / S288c) (Baker's yeast) protein is GPI transamidase component GAB1 (GAB1).